Consider the following 120-residue polypeptide: MNAEQIIKSIEAEHLKPNLPVIHVGDTVRVGVRIIEGGKERVQPYEGTIIAMGNSGINKTITVRRVFQGVGVERVFLLHSPRIANIQVIRRGKVRRAKLYYLRDRVGKATRIQQRFDRPL.

The protein belongs to the bacterial ribosomal protein bL19 family.

This protein is located at the 30S-50S ribosomal subunit interface and may play a role in the structure and function of the aminoacyl-tRNA binding site. This chain is Large ribosomal subunit protein bL19, found in Gloeothece citriformis (strain PCC 7424) (Cyanothece sp. (strain PCC 7424)).